Consider the following 1388-residue polypeptide: Kinesin-like protein KIF15 (1388 aa).

The disordered stretch occupies residues 1–25; that stretch reads MAPGCKTELRSVTNGQSNQPSNEGD. The segment covering 10 to 22 has biased composition (polar residues); the sequence is RSVTNGQSNQPSN. One can recognise a Kinesin motor domain in the interval 26–363; it reads AIKVFVRIRP…LNFAQRAKLI (338 aa). 109 to 116 contributes to the ATP binding site; it reads GQTGSGKT. Residues 368 to 1388 adopt a coiled-coil conformation; the sequence is VVNEDTQGNV…FLKEKKRSES (1021 aa). Thr399 bears the Phosphothreonine mark. Ser568 is subject to Phosphoserine. An N6-acetyllysine modification is found at Lys1009. Phosphoserine is present on residues Ser1141 and Ser1169. Residues 1228-1250 are disordered; it reads QKENSDQNHPDNQQLKNEQEESI.

The protein belongs to the TRAFAC class myosin-kinesin ATPase superfamily. Kinesin family. KLP2 subfamily. Interacts with MKI67 and TPX2. Expressed in testis, colon, thymus and in breast cancer.

Its subcellular location is the cytoplasm. The protein resides in the cytoskeleton. The protein localises to the spindle. Its function is as follows. Plus-end directed kinesin-like motor enzyme involved in mitotic spindle assembly. This is Kinesin-like protein KIF15 (KIF15) from Homo sapiens (Human).